The primary structure comprises 273 residues: Dermonecrotic toxin LruSicTox-alphaIC1a (273 aa).

The active site involves His5. Residues Glu25 and Asp27 each contribute to the Mg(2+) site. His41 (nucleophile) is an active-site residue. 2 cysteine pairs are disulfide-bonded: Cys45/Cys51 and Cys47/Cys190. Position 85 (Asp85) interacts with Mg(2+).

The protein belongs to the arthropod phospholipase D family. Class II subfamily. The cofactor is Mg(2+). Expressed by the venom gland.

It localises to the secreted. The enzyme catalyses an N-(acyl)-sphingosylphosphocholine = an N-(acyl)-sphingosyl-1,3-cyclic phosphate + choline. The catalysed reaction is an N-(acyl)-sphingosylphosphoethanolamine = an N-(acyl)-sphingosyl-1,3-cyclic phosphate + ethanolamine. It carries out the reaction a 1-acyl-sn-glycero-3-phosphocholine = a 1-acyl-sn-glycero-2,3-cyclic phosphate + choline. It catalyses the reaction a 1-acyl-sn-glycero-3-phosphoethanolamine = a 1-acyl-sn-glycero-2,3-cyclic phosphate + ethanolamine. Its function is as follows. Dermonecrotic toxins cleave the phosphodiester linkage between the phosphate and headgroup of certain phospholipids (sphingolipid and lysolipid substrates), forming an alcohol (often choline) and a cyclic phosphate. This toxin acts on sphingomyelin (SM). It may also act on ceramide phosphoethanolamine (CPE), lysophosphatidylcholine (LPC) and lysophosphatidylethanolamine (LPE), but not on lysophosphatidylserine (LPS), and lysophosphatidylglycerol (LPG). It acts by transphosphatidylation, releasing exclusively cyclic phosphate products as second products. Induces dermonecrosis, hemolysis, increased vascular permeability, edema, inflammatory response, and platelet aggregation. The chain is Dermonecrotic toxin LruSicTox-alphaIC1a from Loxosceles rufescens (Mediterranean recluse spider).